A 351-amino-acid polypeptide reads, in one-letter code: Uroporphyrinogen decarboxylase (351 aa).

Substrate-binding positions include Arg25 to Arg29, Asp74, Tyr151, Ser206, and His325.

The protein belongs to the uroporphyrinogen decarboxylase family. In terms of assembly, homodimer.

The protein localises to the cytoplasm. The catalysed reaction is uroporphyrinogen III + 4 H(+) = coproporphyrinogen III + 4 CO2. It functions in the pathway porphyrin-containing compound metabolism; protoporphyrin-IX biosynthesis; coproporphyrinogen-III from 5-aminolevulinate: step 4/4. Functionally, catalyzes the decarboxylation of four acetate groups of uroporphyrinogen-III to yield coproporphyrinogen-III. This Chlorobium chlorochromatii (strain CaD3) protein is Uroporphyrinogen decarboxylase.